A 289-amino-acid chain; its full sequence is MAKLISYAKGGFLRNTRLTSRAVPQVYQHATSSRGFVHLTSSVAQSSAIHVSTPSTPSLMLIMGKRTMFIQTQDTPNPESLKFLPGVEVLGKGNTYDFPSVAAAHCSPLAKLLFRVEGVRSVFFGSDFITISKEEAAEWGLIKPEVFAVIMDFFASGLPILHEARNNADTEILEDDDETVMMIKELLDTRIRPTVQEDGGDIVFMSYDNGVVKLKMQGSCSSCPSSIVTLKNGVQNMLQFYIPEVESVEQVFDEADKMADKEFERFERNLKQKDTSSTAPVGIGGGPAN.

Residues 1–56 (MAKLISYAKGGFLRNTRLTSRAVPQVYQHATSSRGFVHLTSSVAQSSAIHVSTPST) constitute a mitochondrion transit peptide. A nifU region spans residues 183–251 (IKELLDTRIR…IPEVESVEQV (69 aa)). [4Fe-4S] cluster is bound by residues Cys220 and Cys223. A disordered region spans residues 267-289 (ERNLKQKDTSSTAPVGIGGGPAN).

This sequence belongs to the NifU family.

It localises to the mitochondrion. Its function is as follows. Molecular scaffold for [Fe-S] cluster assembly of mitochondrial iron-sulfur proteins. The sequence is that of NFU1 iron-sulfur cluster scaffold homolog, mitochondrial from Drosophila willistoni (Fruit fly).